Consider the following 649-residue polypeptide: Nitrosuccinic acid synthase npaA (649 aa).

It belongs to the nitrosuccinic acid synthase family. It depends on FAD as a cofactor.

It carries out the reaction L-aspartate + 3 NADPH + 3 O2 + 2 H(+) = 2-nitrobutanedioate + 3 NADP(+) + 4 H2O. Its pathway is mycotoxin biosynthesis. Functionally, nitrosuccinic acid synthase; part of the gene cluster that mediates the biosynthesis of the deadly neurotoxic nitroalkane 3-nitropropanoic acid (3-NPA) that acts as an antimetabolite of succinate and irreversibly inhibits succinate dehydrogenase and disrupts mitochondrial oxidative phosphorylation. NpaA catalyzes the iterative oxidation of L-aspartic acid to nitrosuccinic acid (2-nitrobutanedioate). Alternative amino acid substrates such as L-glutamate and D-aspartate are not accepted by npaA as a substrate, showing the strict substrate specificity toward L-aspartate. The nitrosuccinic acid decarboxylase npaB then facilitates decarboxylation of Nitrosuccinic acid to produce 3-NPA. The protein is Nitrosuccinic acid synthase npaA of Aspergillus oryzae (strain ATCC 42149 / RIB 40) (Yellow koji mold).